A 534-amino-acid chain; its full sequence is Echilunin cytochrome P450 monooxygenase (534 aa).

Residues 18-38 (VSPAALSWAVVAIYLGTFFWL) traverse the membrane as a helical segment. C441 is a binding site for heme.

Belongs to the cytochrome P450 family. Heme is required as a cofactor.

The protein resides in the membrane. It catalyses the reaction preechinulin + reduced [NADPH--hemoprotein reductase] + O2 = neoechinulin A + oxidized [NADPH--hemoprotein reductase] + 2 H2O + H(+). The protein operates within secondary metabolite biosynthesis. It participates in alkaloid biosynthesis. Cytochrome P450 monooxygenase; part of the gene cluster that mediates the biosynthesis of echinulin family alkaloid. The pathway begins with the biosynthesis of the cyclic dipeptide cyclo-L-Trp-L-Ala (cyclo-TA) by the NRPS echPS via condensation of L-alanine and L-tryptophan. The prenyltransferase echPT1 then catalyzes the first prenylation step, a reverse prenylation reaction at C2, to yield preechinulin. Preechinulin is the substrate of the cytochrome P450 monooxygenase echP450 that catalyzes the formation of the double bond between C10 and C11 to produce neoechulin A. The unique prenyltransferase echPT2 functions as a competitive enzyme with echP450 for preechinulin metabolization and uses preechinulin for effective regiospecific prenylations. Preechinulin is prenylated by echPT2 at C5 or C7. C7-prenylation leads to accumulation of tardioxopiperazine B without further modification by echPT2. In contrast, the C5-prenylated tardioxopiperazine A can be prenylated again by echPT2, predominantly at C7 to form echinulin or less frequently at C4 to give variecolorin L. EchPT2 also accepts neoechilunin A to produce varlecolorin G (prenylation at C5) or isoechinulin A (prenylation at C7). EchPT2 further converts isoechinulin A into dehydroechinulin. Moreover, a yet unidentified enzyme can also convert neoechilunin A into neoechilunin B by introducing a double bond between positions C14 and C17 and thus provides a further substrate to echPT2 for C5 and C7 prenylation. The polypeptide is Echilunin cytochrome P450 monooxygenase (Aspergillus ruber (strain CBS 135680)).